We begin with the raw amino-acid sequence, 226 residues long: Urease accessory protein UreF (226 aa).

It belongs to the UreF family. UreD, UreF and UreG form a complex that acts as a GTP-hydrolysis-dependent molecular chaperone, activating the urease apoprotein by helping to assemble the nickel containing metallocenter of UreC. The UreE protein probably delivers the nickel.

Its subcellular location is the cytoplasm. Required for maturation of urease via the functional incorporation of the urease nickel metallocenter. This Paraburkholderia phymatum (strain DSM 17167 / CIP 108236 / LMG 21445 / STM815) (Burkholderia phymatum) protein is Urease accessory protein UreF.